The sequence spans 25 residues: Germin-like protein (25 aa).

The protein belongs to the germin family. In terms of assembly, oligomer (believed to be a pentamer but probably hexamer). Post-translationally, the three different mass spectrometry results appear to arise from different glycosylation variants.

It localises to the secreted. Its subcellular location is the extracellular space. It is found in the apoplast. Its function is as follows. May play a role in plant defense. Probably has no oxalate oxidase activity even if the active site is conserved. This is Germin-like protein from Citrus sinensis (Sweet orange).